The primary structure comprises 171 residues: Lipoprotein signal peptidase (171 aa).

4 helical membrane-spanning segments follow: residues 15 to 35, 47 to 67, 72 to 92, and 107 to 127; these read WLWLALLVFIADITIKLIVMD, VLPFFNLLYVHNYGAAFSFLS, WQRWLFTGIAFVVTGMLAYWM, and ALIIGGAVGNVFDRIVHGFVV. Active-site residues include aspartate 128 and aspartate 146. A helical membrane pass occupies residues 141–161; that stretch reads AFNLADSTICIGAAMIILDGF.

This sequence belongs to the peptidase A8 family.

The protein resides in the cell inner membrane. The catalysed reaction is Release of signal peptides from bacterial membrane prolipoproteins. Hydrolyzes -Xaa-Yaa-Zaa-|-(S,diacylglyceryl)Cys-, in which Xaa is hydrophobic (preferably Leu), and Yaa (Ala or Ser) and Zaa (Gly or Ala) have small, neutral side chains.. It functions in the pathway protein modification; lipoprotein biosynthesis (signal peptide cleavage). Its function is as follows. This protein specifically catalyzes the removal of signal peptides from prolipoproteins. The chain is Lipoprotein signal peptidase from Vibrio cholerae serotype O1 (strain ATCC 39315 / El Tor Inaba N16961).